Consider the following 360-residue polypeptide: DNA replication and repair protein RecF (360 aa).

30 to 37 (GQNGSGKT) contributes to the ATP binding site.

This sequence belongs to the RecF family.

It is found in the cytoplasm. Its function is as follows. The RecF protein is involved in DNA metabolism; it is required for DNA replication and normal SOS inducibility. RecF binds preferentially to single-stranded, linear DNA. It also seems to bind ATP. The protein is DNA replication and repair protein RecF of Shewanella oneidensis (strain ATCC 700550 / JCM 31522 / CIP 106686 / LMG 19005 / NCIMB 14063 / MR-1).